A 97-amino-acid chain; its full sequence is Putative septation protein SpoVG (97 aa).

The protein belongs to the SpoVG family.

Its function is as follows. Could be involved in septation. In Borrelia garinii subsp. bavariensis (strain ATCC BAA-2496 / DSM 23469 / PBi) (Borreliella bavariensis), this protein is Putative septation protein SpoVG.